Here is a 426-residue protein sequence, read N- to C-terminus: Serine hydroxymethyltransferase (426 aa).

Residues leucine 121 and 125–127 contribute to the (6S)-5,6,7,8-tetrahydrofolate site; that span reads GHL. Residue lysine 230 is modified to N6-(pyridoxal phosphate)lysine. 354–356 serves as a coordination point for (6S)-5,6,7,8-tetrahydrofolate; the sequence is SPF.

Belongs to the SHMT family. As to quaternary structure, homodimer. Pyridoxal 5'-phosphate is required as a cofactor.

It is found in the cytoplasm. The catalysed reaction is (6R)-5,10-methylene-5,6,7,8-tetrahydrofolate + glycine + H2O = (6S)-5,6,7,8-tetrahydrofolate + L-serine. It participates in one-carbon metabolism; tetrahydrofolate interconversion. Its pathway is amino-acid biosynthesis; glycine biosynthesis; glycine from L-serine: step 1/1. Functionally, catalyzes the reversible interconversion of serine and glycine with tetrahydrofolate (THF) serving as the one-carbon carrier. This reaction serves as the major source of one-carbon groups required for the biosynthesis of purines, thymidylate, methionine, and other important biomolecules. Also exhibits THF-independent aldolase activity toward beta-hydroxyamino acids, producing glycine and aldehydes, via a retro-aldol mechanism. The polypeptide is Serine hydroxymethyltransferase (Gloeobacter violaceus (strain ATCC 29082 / PCC 7421)).